The following is a 325-amino-acid chain: DNA-directed RNA polymerase subunit alpha (325 aa).

Residues 1–231 form an alpha N-terminal domain (alpha-NTD) region; the sequence is MQNSLLKPRI…DQLNVFAALE (231 aa). The segment at 246-325 is alpha C-terminal domain (alpha-CTD); that stretch reads VDPILLRPVD…ENWPPAGLEK (80 aa).

The protein belongs to the RNA polymerase alpha chain family. In terms of assembly, homodimer. The RNAP catalytic core consists of 2 alpha, 1 beta, 1 beta' and 1 omega subunit. When a sigma factor is associated with the core the holoenzyme is formed, which can initiate transcription.

It carries out the reaction RNA(n) + a ribonucleoside 5'-triphosphate = RNA(n+1) + diphosphate. Its function is as follows. DNA-dependent RNA polymerase catalyzes the transcription of DNA into RNA using the four ribonucleoside triphosphates as substrates. This chain is DNA-directed RNA polymerase subunit alpha, found in Herminiimonas arsenicoxydans.